A 431-amino-acid polypeptide reads, in one-letter code: Methionine aminopeptidase 2-2 (431 aa).

The segment at 1 to 76 (MAAQASEKLQ…PPRVPLSTLF (76 aa)) is disordered. Acidic residues predominate over residues 35–47 (EAEDDSDDDEVED). Position 184 (H184) interacts with substrate. Positions 204, 215, and 284 each coordinate a divalent metal cation. H292 contacts substrate. 2 residues coordinate a divalent metal cation: E317 and E412.

Belongs to the peptidase M24A family. Methionine aminopeptidase eukaryotic type 2 subfamily. Co(2+) is required as a cofactor. It depends on Zn(2+) as a cofactor. Mn(2+) serves as cofactor. The cofactor is Fe(2+).

Its subcellular location is the cytoplasm. The catalysed reaction is Release of N-terminal amino acids, preferentially methionine, from peptides and arylamides.. Its function is as follows. Cotranslationally removes the N-terminal methionine from nascent proteins. The N-terminal methionine is often cleaved when the second residue in the primary sequence is small and uncharged (Met-Ala-, Cys, Gly, Pro, Ser, Thr, or Val). The protein is Methionine aminopeptidase 2-2 of Aspergillus niger (strain ATCC MYA-4892 / CBS 513.88 / FGSC A1513).